The sequence spans 152 residues: Deoxyuridine 5'-triphosphate nucleotidohydrolase (152 aa).

Substrate contacts are provided by residues 71-73, asparagine 84, 88-90, and methionine 98; these read RSG and LID.

The protein belongs to the dUTPase family. Requires Mg(2+) as cofactor.

It carries out the reaction dUTP + H2O = dUMP + diphosphate + H(+). The protein operates within pyrimidine metabolism; dUMP biosynthesis; dUMP from dCTP (dUTP route): step 2/2. This enzyme is involved in nucleotide metabolism: it produces dUMP, the immediate precursor of thymidine nucleotides and it decreases the intracellular concentration of dUTP so that uracil cannot be incorporated into DNA. The protein is Deoxyuridine 5'-triphosphate nucleotidohydrolase of Shewanella woodyi (strain ATCC 51908 / MS32).